The following is a 399-amino-acid chain: PCI domain-containing protein 2 (399 aa).

Residues 210-391 (VTFKYYVGRK…QKLVVSKQNP (182 aa)) enclose the PCI domain.

It belongs to the CSN12 family.

In Xenopus laevis (African clawed frog), this protein is PCI domain-containing protein 2 (pcid2).